A 200-amino-acid chain; its full sequence is Casparian strip membrane protein 1 (200 aa).

The Cytoplasmic segment spans residues Met1 to Gly38. A helical membrane pass occupies residues Ile39–Ala59. Topologically, residues Thr60–Gln88 are extracellular. A helical transmembrane segment spans residues Phe89–Val109. Over Val110–Arg121 the chain is Cytoplasmic. Residues Leu122 to Ala142 traverse the membrane as a helical segment. Residues Ala143–Gly175 lie on the Extracellular side of the membrane. N-linked (GlcNAc...) asparagine glycosylation occurs at Asn153. Residues Val176 to Ala196 form a helical membrane-spanning segment. The Cytoplasmic portion of the chain corresponds to Leu197–His200.

Belongs to the Casparian strip membrane proteins (CASP) family. As to quaternary structure, homodimer and heterodimers.

The protein resides in the cell membrane. Functionally, regulates membrane-cell wall junctions and localized cell wall deposition. Required for establishment of the Casparian strip membrane domain (CSD) and the subsequent formation of Casparian strips, a cell wall modification of the root endodermis that determines an apoplastic barrier between the intraorganismal apoplasm and the extraorganismal apoplasm and prevents lateral diffusion. In Ricinus communis (Castor bean), this protein is Casparian strip membrane protein 1.